The primary structure comprises 130 residues: Histone H2A type 1 (130 aa).

A disordered region spans residues 1 to 22 (MSGRGKQGGKTRAKAKTRSSRA). Serine 2 is modified (N-acetylserine). The residue at position 2 (serine 2) is a Phosphoserine. Lysine 6 bears the N6-(2-hydroxyisobutyryl)lysine mark. Lysine 6 carries the post-translational modification N6-acetyllysine. A compositionally biased stretch (basic residues) spans 7 to 19 (QGGKTRAKAKTRS). Lysine 10 bears the N6-(2-hydroxyisobutyryl)lysine; alternate mark. Lysine 10 is modified (N6-lactoyllysine; alternate). Lysine 10 carries the post-translational modification N6-succinyllysine. Residues lysine 14 and lysine 16 each participate in a glycyl lysine isopeptide (Lys-Gly) (interchain with G-Cter in ubiquitin) cross-link. Lysine 37 carries the N6-(2-hydroxyisobutyryl)lysine; alternate modification. Lysine 75 and lysine 76 each carry N6-(2-hydroxyisobutyryl)lysine. At lysine 96 the chain carries N6-(2-hydroxyisobutyryl)lysine; alternate. Lysine 96 bears the N6-succinyllysine mark. Lysine 96 carries the N6-glutaryllysine; alternate modification. Glutamine 105 carries the N5-methylglutamine modification. Lysine 119 carries the post-translational modification N6-(2-hydroxyisobutyryl)lysine; alternate. Position 119 is an N6-glutaryllysine; alternate (lysine 119). Lysine 120 is covalently cross-linked (Glycyl lysine isopeptide (Lys-Gly) (interchain with G-Cter in ubiquitin)).

It belongs to the histone H2A family. The nucleosome is a histone octamer containing two molecules each of H2A, H2B, H3 and H4 assembled in one H3-H4 heterotetramer and two H2A-H2B heterodimers. The octamer wraps approximately 147 bp of DNA. In terms of processing, monoubiquitination of Lys-120 (H2AK119Ub) gives a specific tag for epigenetic transcriptional repression. Following DNA double-strand breaks (DSBs), it is ubiquitinated through 'Lys-63' linkage of ubiquitin moieties, leading to the recruitment of repair proteins to sites of DNA damage. H2AK119Ub and ionizing radiation-induced 'Lys-63'-linked ubiquitination are distinct events. Post-translationally, phosphorylation on Ser-2 is enhanced during mitosis. Phosphorylation on Ser-2 directly represses transcription. Glutamine methylation at Gln-105 (H2AQ104me) by FBL is specifically dedicated to polymerase I. It is present at 35S ribosomal DNA locus and impairs binding of the FACT complex.

The protein resides in the nucleus. It is found in the chromosome. Its function is as follows. Core component of nucleosome. Nucleosomes wrap and compact DNA into chromatin, limiting DNA accessibility to the cellular machineries which require DNA as a template. Histones thereby play a central role in transcription regulation, DNA repair, DNA replication and chromosomal stability. DNA accessibility is regulated via a complex set of post-translational modifications of histones, also called histone code, and nucleosome remodeling. The sequence is that of Histone H2A type 1 from Xenopus laevis (African clawed frog).